Consider the following 364-residue polypeptide: Aminomethyltransferase (364 aa).

This sequence belongs to the GcvT family. In terms of assembly, the glycine cleavage system is composed of four proteins: P, T, L and H.

It carries out the reaction N(6)-[(R)-S(8)-aminomethyldihydrolipoyl]-L-lysyl-[protein] + (6S)-5,6,7,8-tetrahydrofolate = N(6)-[(R)-dihydrolipoyl]-L-lysyl-[protein] + (6R)-5,10-methylene-5,6,7,8-tetrahydrofolate + NH4(+). Functionally, the glycine cleavage system catalyzes the degradation of glycine. The protein is Aminomethyltransferase of Shewanella denitrificans (strain OS217 / ATCC BAA-1090 / DSM 15013).